A 316-amino-acid polypeptide reads, in one-letter code: Malate dehydrogenase (316 aa).

Residues 12 to 17 and Asp36 contribute to the NAD(+) site; that span reads GAGNIG. Residues Arg85 and Arg91 each contribute to the substrate site. Residues Asn98 and 121-123 each bind NAD(+); that span reads VTN. 2 residues coordinate substrate: Asn123 and Arg154. Catalysis depends on His178, which acts as the Proton acceptor.

It belongs to the LDH/MDH superfamily. MDH type 3 family.

The enzyme catalyses (S)-malate + NAD(+) = oxaloacetate + NADH + H(+). In terms of biological role, catalyzes the reversible oxidation of malate to oxaloacetate. This chain is Malate dehydrogenase, found in Wolbachia pipientis wMel.